Consider the following 333-residue polypeptide: Ketol-acid reductoisomerase (NADP(+)) (333 aa).

A KARI N-terminal Rossmann domain is found at 1-179 (MFYDDDADLS…GGTRAGVIKT (179 aa)). NADP(+)-binding positions include 22–25 (YGSQ), Lys45, Ser48, Ser50, and 80–83 (DTAQ). The active site involves His105. Gly131 is an NADP(+) binding site. A KARI C-terminal knotted domain is found at 180 to 325 (TFKDETETDL…KKLRDLMSWV (146 aa)). 4 residues coordinate Mg(2+): Asp188, Glu192, Glu224, and Glu228. Position 249 (Ser249) interacts with substrate.

This sequence belongs to the ketol-acid reductoisomerase family. It depends on Mg(2+) as a cofactor.

The enzyme catalyses (2R)-2,3-dihydroxy-3-methylbutanoate + NADP(+) = (2S)-2-acetolactate + NADPH + H(+). It catalyses the reaction (2R,3R)-2,3-dihydroxy-3-methylpentanoate + NADP(+) = (S)-2-ethyl-2-hydroxy-3-oxobutanoate + NADPH + H(+). The protein operates within amino-acid biosynthesis; L-isoleucine biosynthesis; L-isoleucine from 2-oxobutanoate: step 2/4. Its pathway is amino-acid biosynthesis; L-valine biosynthesis; L-valine from pyruvate: step 2/4. Involved in the biosynthesis of branched-chain amino acids (BCAA). Catalyzes an alkyl-migration followed by a ketol-acid reduction of (S)-2-acetolactate (S2AL) to yield (R)-2,3-dihydroxy-isovalerate. In the isomerase reaction, S2AL is rearranged via a Mg-dependent methyl migration to produce 3-hydroxy-3-methyl-2-ketobutyrate (HMKB). In the reductase reaction, this 2-ketoacid undergoes a metal-dependent reduction by NADPH to yield (R)-2,3-dihydroxy-isovalerate. The chain is Ketol-acid reductoisomerase (NADP(+)) from Mycobacterium ulcerans (strain Agy99).